The primary structure comprises 284 residues: Bifunctional protein FolD (284 aa).

NADP(+) is bound by residues Gly-166–Ser-168 and Ile-232.

The protein belongs to the tetrahydrofolate dehydrogenase/cyclohydrolase family. In terms of assembly, homodimer.

The enzyme catalyses (6R)-5,10-methylene-5,6,7,8-tetrahydrofolate + NADP(+) = (6R)-5,10-methenyltetrahydrofolate + NADPH. The catalysed reaction is (6R)-5,10-methenyltetrahydrofolate + H2O = (6R)-10-formyltetrahydrofolate + H(+). It functions in the pathway one-carbon metabolism; tetrahydrofolate interconversion. Catalyzes the oxidation of 5,10-methylenetetrahydrofolate to 5,10-methenyltetrahydrofolate and then the hydrolysis of 5,10-methenyltetrahydrofolate to 10-formyltetrahydrofolate. The chain is Bifunctional protein FolD from Shewanella sp. (strain MR-7).